Here is a 249-residue protein sequence, read N- to C-terminus: Aspartate/glutamate leucyltransferase (249 aa).

It belongs to the R-transferase family. Bpt subfamily.

The protein resides in the cytoplasm. The catalysed reaction is N-terminal L-glutamyl-[protein] + L-leucyl-tRNA(Leu) = N-terminal L-leucyl-L-glutamyl-[protein] + tRNA(Leu) + H(+). The enzyme catalyses N-terminal L-aspartyl-[protein] + L-leucyl-tRNA(Leu) = N-terminal L-leucyl-L-aspartyl-[protein] + tRNA(Leu) + H(+). Its function is as follows. Functions in the N-end rule pathway of protein degradation where it conjugates Leu from its aminoacyl-tRNA to the N-termini of proteins containing an N-terminal aspartate or glutamate. This chain is Aspartate/glutamate leucyltransferase, found in Brucella anthropi (strain ATCC 49188 / DSM 6882 / CCUG 24695 / JCM 21032 / LMG 3331 / NBRC 15819 / NCTC 12168 / Alc 37) (Ochrobactrum anthropi).